The following is a 65-amino-acid chain: uncharacterized protein (65 aa).

A signal peptide spans Met1 to Ser16.

This is an uncharacterized protein from Saccharomyces cerevisiae (strain ATCC 204508 / S288c) (Baker's yeast).